Here is a 593-residue protein sequence, read N- to C-terminus: Translocon at the outer membrane of chloroplasts 64 (593 aa).

Topologically, residues 1–4 (MKSM) are chloroplast intermembrane. Residues 5-25 (ASPSSQIWVILGLGLAGIYVL) traverse the membrane as a helical segment. The Cytoplasmic segment spans residues 26–144 (TRKLTQAVKE…NPAVPNRVPG (119 aa)). Residues 145 to 165 (GSSSGAAVAVAANFVDFSLGV) form a helical membrane-spanning segment. Residues 166–403 (DTSGGVRVPA…LSHDYQSRAL (238 aa)) are Chloroplast intermembrane-facing. A helical membrane pass occupies residues 404–424 (SLLSIASISGCCQVTVPLGFF). Residues 425-593 (DKNPVSVSLI…SAERLRKLFQ (169 aa)) are Cytoplasmic-facing. TPR repeat units follow at residues 477–510 (AEIS…CGNN), 511–544 (ATYY…DKKN), and 545–578 (VKAY…EPTN).

As to quaternary structure, part of the Toc complex and of the intermembrane space complex. Interacts with TOC12, TIC22 and with the cytosolic domain of TOC34 in a GTP dependent manner. Interacts (via TPR region) with HSP90 and with HSP70 with low efficiency.

The protein localises to the plastid. It localises to the chloroplast outer membrane. In terms of biological role, chaperone receptor mediating Hsp90-dependent protein targeting to chloroplasts. Bi-functional preprotein receptor acting on both sides of the membrane. This chain is Translocon at the outer membrane of chloroplasts 64 (TOC64), found in Pisum sativum (Garden pea).